The sequence spans 213 residues: Thymidylate kinase (213 aa).

9 to 16 provides a ligand contact to ATP; that stretch reads GIEGCGKT.

This sequence belongs to the thymidylate kinase family.

It catalyses the reaction dTMP + ATP = dTDP + ADP. Functionally, phosphorylation of dTMP to form dTDP in both de novo and salvage pathways of dTTP synthesis. This is Thymidylate kinase from Geobacter sulfurreducens (strain ATCC 51573 / DSM 12127 / PCA).